The following is a 146-amino-acid chain: Probable glycine cleavage system H protein 3 (146 aa).

Residues 29 to 111 (VVSVGMTDLG…PYGSWIIKVS (83 aa)) enclose the Lipoyl-binding domain. N6-lipoyllysine is present on K71.

This sequence belongs to the GcvH family. In terms of assembly, the glycine cleavage system is composed of four proteins: P, T, L and H. The cofactor is (R)-lipoate.

In terms of biological role, the glycine cleavage system catalyzes the degradation of glycine. The H protein shuttles the methylamine group of glycine from the P protein to the T protein. The chain is Probable glycine cleavage system H protein 3 from Sulfolobus acidocaldarius (strain ATCC 33909 / DSM 639 / JCM 8929 / NBRC 15157 / NCIMB 11770).